The primary structure comprises 469 residues: Glutamate--tRNA ligase (469 aa).

The 'HIGH' region signature appears at 11–21 (PSPTGFIHLGN). Residues 118–131 (GEKPRYDGTWRPEP) are compositionally biased toward basic and acidic residues. Residues 118-138 (GEKPRYDGTWRPEPGKVLPEP) form a disordered region. The 'KMSKS' region signature appears at 243-247 (KMSKR). Residue lysine 246 coordinates ATP.

The protein belongs to the class-I aminoacyl-tRNA synthetase family. Glutamate--tRNA ligase type 1 subfamily. Monomer.

The protein resides in the cytoplasm. The catalysed reaction is tRNA(Glu) + L-glutamate + ATP = L-glutamyl-tRNA(Glu) + AMP + diphosphate. Functionally, catalyzes the attachment of glutamate to tRNA(Glu) in a two-step reaction: glutamate is first activated by ATP to form Glu-AMP and then transferred to the acceptor end of tRNA(Glu). The polypeptide is Glutamate--tRNA ligase (Burkholderia thailandensis (strain ATCC 700388 / DSM 13276 / CCUG 48851 / CIP 106301 / E264)).